A 345-amino-acid polypeptide reads, in one-letter code: Probable translocation protein y4yO (345 aa).

The segment covering 1-22 (MSDTSEEKSHGATPKKLSDARK) has biased composition (basic and acidic residues). The disordered stretch occupies residues 1–25 (MSDTSEEKSHGATPKKLSDARKRGQ). 3 helical membrane passes run 87–107 (LATVGPLLSALFGAVILAALL), 151–171 (VLVLGGTFSLFFLGLWKTMVY), and 189–209 (QLIGIGAGALLIGGLIDLLLQ).

It belongs to the type III secretion exporter family.

Its subcellular location is the cell membrane. Functionally, could be involved in the secretion of an unknown factor. The sequence is that of Probable translocation protein y4yO from Sinorhizobium fredii (strain NBRC 101917 / NGR234).